A 796-amino-acid polypeptide reads, in one-letter code: Cadherin-11 (796 aa).

The first 24 residues, 1-24, serve as a signal peptide directing secretion; the sequence is MKENYCLQAALVCLSMLYHSQAFA. Residues 25–53 constitute a propeptide that is removed on maturation; that stretch reads LERRSHLHPSFHGHHEKGKEGQVLQRSKR. Cadherin domains follow at residues 54–159, 160–268, 269–383, 384–486, and 487–612; these read GWVW…PPEF, LHEI…PPKF, PQSV…PPMF, LAPS…DNAP, and KFAA…YILN. Topologically, residues 54 to 617 are extracellular; that stretch reads GWVWNQFFVI…AYILNAGLST (564 aa). N-linked (GlcNAc...) asparagine glycans are attached at residues asparagine 455 and asparagine 540. The chain crosses the membrane as a helical span at residues 618–640; sequence GALIAILACIVILLVIVVLFVTL. Over 641-796 the chain is Cytoplasmic; the sequence is RRQKKEPLIV…GSKDTFDDDS (156 aa). Phosphoserine is present on serine 788. Threonine 791 is modified (phosphothreonine).

As to quaternary structure, interacts with PCDH8. In terms of tissue distribution, selectively expressed in osteoblastic cell lines, precursor cell lines of osteoblasts, and primary osteoblastic cells from calvaria, as well as in lung, testis, and brain tissues at low levels.

It localises to the cell membrane. Cadherins are calcium-dependent cell adhesion proteins. They preferentially interact with themselves in a homophilic manner in connecting cells; cadherins may thus contribute to the sorting of heterogeneous cell types. Required for proper focal adhesion assembly. Involved in the regulation of cell migration. The chain is Cadherin-11 (Cdh11) from Mus musculus (Mouse).